A 214-amino-acid chain; its full sequence is MVFFPWWISLLFNKGLESWVTNWWNTTHSETFLTDMQEKSILDKFIELEELLLLDEMINEYPETHLQTLRIGIHKEMVRLIKMRNEDHIHTILHLSTNIICFIIFRGYSILGNKELLILNSWMQEFLYNLSDTIKAFSILLLTDFCIGFHSPHGWELMIAYVYKDFGFAQNDQIISGLVSTFPVILDTIFKYWIFRYLNRVSPSLVVIYDSMND.

Helical transmembrane passes span 92 to 112 and 174 to 194; these read ILHL…SILG and IISG…KYWI.

This sequence belongs to the CemA family.

It is found in the plastid. It localises to the chloroplast inner membrane. The catalysed reaction is K(+)(in) + H(+)(out) = K(+)(out) + H(+)(in). Functionally, contributes to K(+)/H(+) antiport activity by supporting proton efflux to control proton extrusion and homeostasis in chloroplasts in a light-dependent manner to modulate photosynthesis. Prevents excessive induction of non-photochemical quenching (NPQ) under continuous-light conditions. Indirectly promotes efficient inorganic carbon uptake into chloroplasts. The protein is Potassium/proton antiporter CemA of Oenothera argillicola (Appalachian evening primrose).